Reading from the N-terminus, the 260-residue chain is UPF0246 protein APJL_0596 (260 aa).

This sequence belongs to the UPF0246 family.

The polypeptide is UPF0246 protein APJL_0596 (Actinobacillus pleuropneumoniae serotype 3 (strain JL03)).